Reading from the N-terminus, the 136-residue chain is Ribonuclease P protein component (136 aa).

The interval 116 to 136 (RPQRAAAKGSAGTTQKGTPRA) is disordered. Residues 126 to 136 (AGTTQKGTPRA) are compositionally biased toward polar residues.

Belongs to the RnpA family. Consists of a catalytic RNA component (M1 or rnpB) and a protein subunit.

The enzyme catalyses Endonucleolytic cleavage of RNA, removing 5'-extranucleotides from tRNA precursor.. RNaseP catalyzes the removal of the 5'-leader sequence from pre-tRNA to produce the mature 5'-terminus. It can also cleave other RNA substrates such as 4.5S RNA. The protein component plays an auxiliary but essential role in vivo by binding to the 5'-leader sequence and broadening the substrate specificity of the ribozyme. In Pseudarthrobacter chlorophenolicus (strain ATCC 700700 / DSM 12829 / CIP 107037 / JCM 12360 / KCTC 9906 / NCIMB 13794 / A6) (Arthrobacter chlorophenolicus), this protein is Ribonuclease P protein component.